Reading from the N-terminus, the 545-residue chain is Chaperonin GroEL (545 aa).

Residues 30 to 33 (TLGP), lysine 51, 87 to 91 (DGTTT), glycine 415, and aspartate 496 contribute to the ATP site.

It belongs to the chaperonin (HSP60) family. Forms a cylinder of 14 subunits composed of two heptameric rings stacked back-to-back. Interacts with the co-chaperonin GroES.

The protein localises to the cytoplasm. The enzyme catalyses ATP + H2O + a folded polypeptide = ADP + phosphate + an unfolded polypeptide.. Functionally, together with its co-chaperonin GroES, plays an essential role in assisting protein folding. The GroEL-GroES system forms a nano-cage that allows encapsulation of the non-native substrate proteins and provides a physical environment optimized to promote and accelerate protein folding. The protein is Chaperonin GroEL of Haemophilus influenzae (strain 86-028NP).